The following is a 396-amino-acid chain: Acetate kinase (396 aa).

Position 8 (Asn-8) interacts with Mg(2+). ATP is bound at residue Lys-15. Residue Arg-89 participates in substrate binding. The active-site Proton donor/acceptor is the Asp-146. Residues 206–210 (HLGNG), 280–282 (DMR), and 328–332 (GVGEN) contribute to the ATP site. Position 382 (Glu-382) interacts with Mg(2+).

Belongs to the acetokinase family. Homodimer. Mg(2+) serves as cofactor. The cofactor is Mn(2+).

Its subcellular location is the cytoplasm. The catalysed reaction is acetate + ATP = acetyl phosphate + ADP. The protein operates within metabolic intermediate biosynthesis; acetyl-CoA biosynthesis; acetyl-CoA from acetate: step 1/2. Its function is as follows. Catalyzes the formation of acetyl phosphate from acetate and ATP. Can also catalyze the reverse reaction. The chain is Acetate kinase from Clavibacter sepedonicus (Clavibacter michiganensis subsp. sepedonicus).